A 388-amino-acid polypeptide reads, in one-letter code: Succinate--CoA ligase [ADP-forming] subunit beta (388 aa).

Residues 9–245 (KELLASYGLP…KSQENERELK (237 aa)) enclose the ATP-grasp domain. ATP-binding positions include Lys46, 53–55 (GRG), Glu100, Tyr103, and Glu108. The Mg(2+) site is built by Asn200 and Asp214. Substrate-binding positions include Asn265 and 322 to 324 (GIV).

Belongs to the succinate/malate CoA ligase beta subunit family. In terms of assembly, heterotetramer of two alpha and two beta subunits. It depends on Mg(2+) as a cofactor.

It catalyses the reaction succinate + ATP + CoA = succinyl-CoA + ADP + phosphate. The catalysed reaction is GTP + succinate + CoA = succinyl-CoA + GDP + phosphate. It functions in the pathway carbohydrate metabolism; tricarboxylic acid cycle; succinate from succinyl-CoA (ligase route): step 1/1. Functionally, succinyl-CoA synthetase functions in the citric acid cycle (TCA), coupling the hydrolysis of succinyl-CoA to the synthesis of either ATP or GTP and thus represents the only step of substrate-level phosphorylation in the TCA. The beta subunit provides nucleotide specificity of the enzyme and binds the substrate succinate, while the binding sites for coenzyme A and phosphate are found in the alpha subunit. The chain is Succinate--CoA ligase [ADP-forming] subunit beta from Neisseria gonorrhoeae (strain NCCP11945).